A 456-amino-acid polypeptide reads, in one-letter code: Putative E3 ubiquitin-protein ligase XBAT31 (456 aa).

ANK repeat units follow at residues Asp45–Leu74, His78–Met107, Asn112–Val141, Lys157–Ala186, and Pro194–Arg224. The RING-type zinc-finger motif lies at Cys319–Arg368.

It catalyses the reaction S-ubiquitinyl-[E2 ubiquitin-conjugating enzyme]-L-cysteine + [acceptor protein]-L-lysine = [E2 ubiquitin-conjugating enzyme]-L-cysteine + N(6)-ubiquitinyl-[acceptor protein]-L-lysine.. It functions in the pathway protein modification; protein ubiquitination. Its function is as follows. No E3 ubiquitin-protein ligase activity observed when associated with the E2 enzyme UBC8 in vitro. The polypeptide is Putative E3 ubiquitin-protein ligase XBAT31 (XBAT31) (Arabidopsis thaliana (Mouse-ear cress)).